The following is a 175-amino-acid chain: MGRTLESKQQIVEELKGLLGEAEMALVLDYQGLSIKEMSDLRTRLQASNGVCKVTKNTLMRHAINGNGAWSNLESLLTGTNAFVLIKGDVGGAVKAVQAFQKDTKKSETKGGLFEGKLLSQGEIKAIGDLPTKEVLMAQIAGSLNALATKVAVGINEVPSGLARALHQHAESGES.

Belongs to the universal ribosomal protein uL10 family. Part of the ribosomal stalk of the 50S ribosomal subunit. The N-terminus interacts with L11 and the large rRNA to form the base of the stalk. The C-terminus forms an elongated spine to which L12 dimers bind in a sequential fashion forming a multimeric L10(L12)X complex.

Its function is as follows. Forms part of the ribosomal stalk, playing a central role in the interaction of the ribosome with GTP-bound translation factors. The sequence is that of Large ribosomal subunit protein uL10 from Prochlorococcus marinus (strain MIT 9313).